A 420-amino-acid polypeptide reads, in one-letter code: Phosphoglycerate kinase (420 aa).

(2R)-3-phosphoglycerate contacts are provided by V24, D25, F26, N27, R40, S63, H64, G66, R67, L122, R123, H170, and R171. G214 is an ADP binding site. G214 contacts CDP. Positions 215 and 216 each coordinate AMP. ATP is bound at residue A215. A215 contributes to the Mg(2+) binding site. D219 is a CDP binding site. D219 lines the Mg(2+) pocket. K220 contributes to the AMP binding site. K220 contributes to the ATP binding site. G238 is a binding site for ADP. G238 contributes to the CDP binding site. 2 residues coordinate AMP: G239 and G313. ATP is bound by residues G239 and G313. Positions 338 and 343 each coordinate CDP. F343 is an ADP binding site. E344 is a binding site for AMP. 3 residues coordinate ATP: E344, D375, and T376. D375 provides a ligand contact to Mg(2+).

This sequence belongs to the phosphoglycerate kinase family. In terms of assembly, monomer. Mg(2+) is required as a cofactor.

It catalyses the reaction (2R)-3-phosphoglycerate + ATP = (2R)-3-phospho-glyceroyl phosphate + ADP. It participates in carbohydrate degradation; glycolysis; pyruvate from D-glyceraldehyde 3-phosphate: step 2/5. The protein is Phosphoglycerate kinase (PGK) of Tetrahymena thermophila.